The following is a 342-amino-acid chain: MSAFTPASEVLLRHSDDFEQSRILFAGDLQDDLPALFECAASRAHTQQFHHWQVLSRQMGDNVRFSLVAQASDVADCDTLIYYWPKNKPEAQFQLMNILSLMPSGSDVFVVGENRSGVRSAEQMLADYAPLNKVDSARRCGLYHGRLEKQPQFSLESWWAEYNIDGLTIKTLPGVFSRDGLDVGSQLLLSTLTPHTKGKVLDVGCGAGVLSAALASHSPKARLTLCDVSAPAVEASRATLAANGLEGEVFASNVFSEVKGRFDMIISNPPFHDGMQTSLDAAQTLIRGAVRHLNSGGELRIVANAFLPYPKILDETFGFHEVIAQTGRFKVYRTVMTRQAKK.

Belongs to the methyltransferase superfamily. RsmC family. As to quaternary structure, monomer.

Its subcellular location is the cytoplasm. The catalysed reaction is guanosine(1207) in 16S rRNA + S-adenosyl-L-methionine = N(2)-methylguanosine(1207) in 16S rRNA + S-adenosyl-L-homocysteine + H(+). Functionally, specifically methylates the guanine in position 1207 of 16S rRNA in the 30S particle. In Salmonella choleraesuis (strain SC-B67), this protein is Ribosomal RNA small subunit methyltransferase C.